The following is a 298-amino-acid chain: 4-hydroxy-tetrahydrodipicolinate synthase (298 aa).

A pyruvate-binding site is contributed by Thr51. Tyr139 (proton donor/acceptor) is an active-site residue. The active-site Schiff-base intermediate with substrate is Lys167. Residue Ile209 coordinates pyruvate.

This sequence belongs to the DapA family. As to quaternary structure, homotetramer; dimer of dimers.

Its subcellular location is the cytoplasm. It catalyses the reaction L-aspartate 4-semialdehyde + pyruvate = (2S,4S)-4-hydroxy-2,3,4,5-tetrahydrodipicolinate + H2O + H(+). Its pathway is amino-acid biosynthesis; L-lysine biosynthesis via DAP pathway; (S)-tetrahydrodipicolinate from L-aspartate: step 3/4. Functionally, catalyzes the condensation of (S)-aspartate-beta-semialdehyde [(S)-ASA] and pyruvate to 4-hydroxy-tetrahydrodipicolinate (HTPA). This chain is 4-hydroxy-tetrahydrodipicolinate synthase, found in Haemophilus influenzae (strain PittEE).